A 691-amino-acid polypeptide reads, in one-letter code: Pentatricopeptide repeat-containing protein At4g37170 (691 aa).

PPR repeat units lie at residues 84–118, 119–149, 150–184, 185–211, 217–251, 252–286, 287–317, 318–352, 353–383, 384–418, 419–449, and 455–485; these read PAST…GFVP, GIVI…MPNR, DLCS…DSYS, WTAM…MQRV, NIFT…GLDS, DEVL…DVVS, WTSM…CERP, NEYT…GFDP, YSFA…CPKP, DLVS…GTKP, DHVT…ITEK, and TSDH…MPMK. The tract at residues 490–565 is type E motif; that stretch reads LWASVLGGCS…RPGSSWTEIK (76 aa). Residues 566 to 596 are type E(+) motif; that stretch reads RKRHVFIAADTSHPMYNQIVEFLRELRKKMK. The tract at residues 597–691 is type DYW motif; it reads EEGYVPATSL…NGQCSCGDYW (95 aa).

The protein belongs to the PPR family. PCMP-H subfamily.

The chain is Pentatricopeptide repeat-containing protein At4g37170 (PCMP-H5) from Arabidopsis thaliana (Mouse-ear cress).